The sequence spans 22 residues: Superoxide dismutase [Cu-Zn] 2 (22 aa).

It belongs to the Cu-Zn superoxide dismutase family. As to quaternary structure, homodimer. The cofactor is Cu cation. Requires Zn(2+) as cofactor. As to expression, dominant isozyme in roots.

The protein localises to the cytoplasm. The enzyme catalyses 2 superoxide + 2 H(+) = H2O2 + O2. Destroys radicals which are normally produced within the cells and which are toxic to biological systems. The sequence is that of Superoxide dismutase [Cu-Zn] 2 from Picea abies (Norway spruce).